Consider the following 87-residue polypeptide: Histone H1.C6/H1.C9 (87 aa).

Residues 1–87 (MSDAAVPPKK…KKAVKKAPKK (87 aa)) are disordered. The span at 11 to 87 (ASPKKASPKK…KKAVKKAPKK (77 aa)) shows a compositional bias: basic residues.

The protein localises to the nucleus. Its subcellular location is the chromosome. The polypeptide is Histone H1.C6/H1.C9 (Trypanosoma cruzi).